We begin with the raw amino-acid sequence, 88 residues long: Parvalbumin beta 3 (88 aa).

Alanine 1 is subject to N-acetylalanine. Positions 31-66 (KSPEEVKKFFAIIDQDHSGFIEEEELKLFLQTFSAG) constitute an EF-hand domain. The Ca(2+) site is built by aspartate 44, aspartate 46, serine 48, phenylalanine 50, glutamate 52, glutamate 55, and glutamate 81.

The protein belongs to the parvalbumin family.

In terms of biological role, in muscle, parvalbumin is thought to be involved in relaxation after contraction. It binds two calcium ions. This chain is Parvalbumin beta 3, found in Merluccius productus (North Pacific hake).